The chain runs to 798 residues: Integrin beta-1 (798 aa).

The N-terminal stretch at Met1–Gly20 is a signal peptide. Topologically, residues Gln21–Asp728 are extracellular. Positions Arg26–His76 constitute a PSI domain. Cystine bridges form between Cys27–Cys45, Cys35–Cys464, Cys38–Cys64, Cys48–Cys75, Cys207–Cys213, Cys261–Cys301, Cys401–Cys415, Cys435–Cys462, Cys466–Cys486, Cys477–Cys489, Cys491–Cys500, Cys502–Cys533, Cys516–Cys531, Cys525–Cys536, Cys538–Cys553, Cys555–Cys576, Cys560–Cys574, Cys568–Cys579, Cys581–Cys590, Cys592–Cys615, Cys599–Cys613, Cys607–Cys618, Cys620–Cys630, Cys633–Cys636, Cys640–Cys691, Cys646–Cys665, Cys649–Cys661, and Cys699–Cys723. Residue Asn50 is glycosylated (N-linked (GlcNAc...) asparagine). Residues Cys75–Arg84 are compositionally biased toward basic and acidic residues. A disordered region spans residues Cys75 to Gln107. Residues Asn94 and Asn97 are each glycosylated (N-linked (GlcNAc...) asparagine). The 239-residue stretch at Asp140 to Leu378 folds into the VWFA domain. Mg(2+) is bound by residues Ser152 and Ser154. Ca(2+) is bound by residues Ser154, Asp157, Asp158, and Glu189. Positions Cys207–Cys213 are CX3CL1-binding. A glycan (N-linked (GlcNAc...) asparagine) is linked at Asn212. Asn244, Asp246, Pro248, and Glu249 together coordinate Ca(2+). Glu249 serves as a coordination point for Mg(2+). N-linked (GlcNAc...) asparagine glycosylation is present at Asn269. Residues Leu295–Tyr314 form a CX3CL1-binding region. Ala362 contributes to the Ca(2+) binding site. Residues Asn363, Asn406, and Asn417 are each glycosylated (N-linked (GlcNAc...) asparagine). The segment at Ile383–Glu465 is interaction with TMEM182. I-EGF domains follow at residues Cys466–Glu501, Cys502–Glu554, Cys555–Asp591, and Cys592–Glu631. N-linked (GlcNAc...) asparagine glycosylation is present at Asn481. Asn520 carries an N-linked (GlcNAc...) asparagine glycan. An N-linked (GlcNAc...) asparagine glycan is attached at Asn584. Asn669 carries N-linked (GlcNAc...) asparagine glycosylation. The chain crosses the membrane as a helical span at residues Ile729–Leu749. At Ile750 to Lys798 the chain is on the cytoplasmic side. The segment at Glu762–Glu767 is signal for sorting from recycling endosomes; interaction with ACAP1. Thr777 bears the Phosphothreonine mark. At Tyr783 the chain carries Phosphotyrosine. At Ser785 the chain carries Phosphoserine. An interaction with ITGB1BP1 region spans residues Ser785–Asn792. At Thr789 the chain carries Phosphothreonine. Position 794 is an N6-acetyllysine; alternate (Lys794). Lys794 participates in a covalent cross-link: Glycyl lysine isopeptide (Lys-Gly) (interchain with G-Cter in SUMO1); alternate.

Belongs to the integrin beta chain family. In terms of assembly, interacts with seprase FAP (seprase); the interaction occurs at the cell surface of invadopodia membrane in a collagen-dependent manner. Heterodimer of an alpha and a beta subunit. Beta-1 associates with either alpha-1, alpha-2, alpha-3, alpha-4, alpha-5, alpha-6, alpha-7, alpha-8, alpha-9, alpha-10, alpha-11 or alpha-V. ITGA6:ITGB1 is found in a complex with CD9; interaction takes place in oocytes and is involved in sperm-egg fusion. Binds LGALS3BP and NMRK2, when associated with alpha-7, but not with alpha-5. Interacts with FLNA, FLNB, FLNC and RANBP9. Interacts with KRT1 in the presence of RACK1 and SRC. Interacts with JAML; integrin alpha-4/beta-1 may regulate leukocyte to endothelial cells adhesion by controlling JAML homodimerization. Interacts with RAB21. Interacts (via the cytoplasmic region) with RAB25 (via the hypervariable C-terminal region). Interacts with MYO10. Interacts with ITGB1BP1 (via C-terminal region); the interaction is a prerequisite for focal adhesion disassembly. Interacts with TLN1; the interaction is prevented by competitive binding of ITGB1BP1. Interacts with ACAP1; required for ITGB1 recycling. Interacts with ASAP3. Interacts with FERMT2; the interaction is inhibited in presence of ITGB1BP1. Interacts with DAB2. Interacts with FGR and HCK. Interacts with alpha-7A and alpha-7B in adult skeletal muscle. Interacts with alpha-7B in cardiomyocytes of adult heart. Interacts with EMP2; the interaction may be direct or indirect and ITGB1 has a heterodimer form. ITGA5:ITGB1 interacts with CCN3. ITGA4:ITGB1 is found in a ternary complex with CX3CR1 and CX3CL1. ITGA5:ITGB1 interacts with FBN1. ITGA5:ITGB1 interacts with IL1B. Interacts with MDK. ITGA4:ITGB1 interacts with MDK; this interaction mediates MDK-induced osteoblast cells migration through PXN phosphorylation. ITGA6:ITGB1 interacts with MDK; this interaction mediates MDK-induced neurite-outgrowth. ITGA5:ITGB1 interacts with ACE2. Interacts with TMEM182 and LAMB1. Interacts with tensin TNS3; TNS3 also interacts with PEAK1, thus acting as an adapter molecule to bridge the association of PEAK1 with ITGB1. Interacts with tensin TNS4; the interaction displaces tensin TNS3 from the ITGB1 cytoplasmic tail and promotes ITGB1 stability. Integrin ITGA9:ITGB1 interacts with SPP1/OPN (via N-terminus). Integrin ITGA9:ITGB1 interacts with TNC/TNFN3 (via the 3rd Fibronectin type-III domain). Integrins ITGA4:ITGB1 and ITGA9:ITGB1 interact with SVEP1 (via Sushi domain 21); thereby inhibit Ca(2+) intracellular signaling and as a result repress vasocontraction. ITGA4:ITGB1 and ITGA5:ITGB1 interacts with SELP. Interacts with CD248. ITGA5:ITGB1 interacts with IGFBP1. ITGA4:ITGB1 interacts with BCAM. Interacts with ADGRG6. Expressed in the spleen, thymus, alveolar macrophages, bone marrow, liver and kidney.

The protein resides in the cell membrane. Its subcellular location is the cell projection. The protein localises to the invadopodium membrane. It localises to the ruffle membrane. It is found in the recycling endosome. The protein resides in the melanosome. Its subcellular location is the lamellipodium. The protein localises to the ruffle. It localises to the cell junction. It is found in the focal adhesion. Functionally, integrins alpha-1/beta-1, alpha-2/beta-1, alpha-10/beta-1 and alpha-11/beta-1 are receptors for collagen. Integrins alpha-1/beta-1 and alpha-2/beta-2 recognize the proline-hydroxylated sequence G-F-P-G-E-R in collagen. Integrins alpha-2/beta-1, alpha-3/beta-1, alpha-4/beta-1, alpha-5/beta-1, alpha-8/beta-1, alpha-10/beta-1, alpha-11/beta-1 and alpha-V/beta-1 are receptors for fibronectin. Alpha-4/beta-1 recognizes one or more domains within the alternatively spliced CS-1 and CS-5 regions of fibronectin. Integrin alpha-5/beta-1 is a receptor for fibrinogen. Integrin alpha-1/beta-1, alpha-2/beta-1, alpha-6/beta-1 and alpha-7/beta-1 are receptors for lamimin. Integrin alpha-6/beta-1 (ITGA6:ITGB1) is present in oocytes and is involved in sperm-egg fusion. Integrin alpha-4/beta-1 is a receptor for VCAM1 and recognizes the sequence Q-I-D-S in VCAM1. Integrin alpha-9/beta-1 is a receptor for VCAM1, cytotactin and osteopontin. It recognizes the sequence A-E-I-D-G-I-E-L in cytotactin. Integrin alpha-3/beta-1 is a receptor for epiligrin, thrombospondin and CSPG4. Integrin alpha-3/beta-1 provides a docking site for FAP (seprase) at invadopodia plasma membranes in a collagen-dependent manner and hence may participate in the adhesion, formation of invadopodia and matrix degradation processes, promoting cell invasion. Alpha-3/beta-1 may mediate with LGALS3 the stimulation by CSPG4 of endothelial cells migration. Integrin alpha-V/beta-1 is a receptor for vitronectin. Beta-1 integrins recognize the sequence R-G-D in a wide array of ligands. When associated with alpha-7/beta-1 integrin, regulates cell adhesion and laminin matrix deposition. Involved in promoting endothelial cell motility and angiogenesis. Involved in osteoblast compaction through the fibronectin fibrillogenesis cell-mediated matrix assembly process and the formation of mineralized bone nodules. May be involved in up-regulation of the activity of kinases such as PKC via binding to KRT1. Together with KRT1 and RACK1, serves as a platform for SRC activation or inactivation. Plays a mechanistic adhesive role during telophase, required for the successful completion of cytokinesis. ITGA4:ITGB1 binds to fractalkine (CX3CL1) and may act as its coreceptor in CX3CR1-dependent fractalkine signaling. ITGA4:ITGB1 and ITGA5:ITGB1 bind to PLA2G2A via a site (site 2) which is distinct from the classical ligand-binding site (site 1) and this induces integrin conformational changes and enhanced ligand binding to site 1. ITGA5:ITGB1 acts as a receptor for fibrillin-1 (FBN1) and mediates R-G-D-dependent cell adhesion to FBN1. ITGA5:ITGB1 acts as a receptor for fibronectin FN1 and mediates R-G-D-dependent cell adhesion to FN1. ITGA5:ITGB1 is a receptor for IL1B and binding is essential for IL1B signaling. ITGA5:ITGB3 is a receptor for soluble CD40LG and is required for CD40/CD40LG signaling. Plays an important role in myoblast differentiation and fusion during skeletal myogenesis. ITGA9:ITGB1 may play a crucial role in SVEP1/polydom-mediated myoblast cell adhesion. Integrins ITGA9:ITGB1 and ITGA4:ITGB1 repress PRKCA-mediated L-type voltage-gated channel Ca(2+) influx and ROCK-mediated calcium sensitivity in vascular smooth muscle cells via their interaction with SVEP1, thereby inhibit vasocontraction. This is Integrin beta-1 (ITGB1) from Sus scrofa (Pig).